Here is a 112-residue protein sequence, read N- to C-terminus: Phosphoribosyl-ATP pyrophosphatase (112 aa).

The protein belongs to the PRA-PH family.

It is found in the cytoplasm. It catalyses the reaction 1-(5-phospho-beta-D-ribosyl)-ATP + H2O = 1-(5-phospho-beta-D-ribosyl)-5'-AMP + diphosphate + H(+). It functions in the pathway amino-acid biosynthesis; L-histidine biosynthesis; L-histidine from 5-phospho-alpha-D-ribose 1-diphosphate: step 2/9. The protein is Phosphoribosyl-ATP pyrophosphatase of Chromohalobacter salexigens (strain ATCC BAA-138 / DSM 3043 / CIP 106854 / NCIMB 13768 / 1H11).